The chain runs to 545 residues: CTP synthase (545 aa).

Residues methionine 1–leucine 266 are amidoligase domain. Serine 14 contacts CTP. Serine 14 serves as a coordination point for UTP. Residues serine 15–isoleucine 20 and aspartate 72 contribute to the ATP site. The Mg(2+) site is built by aspartate 72 and glutamate 140. CTP contacts are provided by residues aspartate 147–glutamate 149, lysine 187–glutamine 192, and lysine 223. Residues lysine 187–glutamine 192 and lysine 223 contribute to the UTP site. Lysine 239–valine 241 contacts ATP. The 252-residue stretch at threonine 291–lysine 542 folds into the Glutamine amidotransferase type-1 domain. Residue glycine 352 coordinates L-glutamine. Cysteine 379 functions as the Nucleophile; for glutamine hydrolysis in the catalytic mechanism. Residues leucine 380–glutamine 383, glutamate 403, and arginine 470 each bind L-glutamine. Residues histidine 515 and glutamate 517 contribute to the active site.

The protein belongs to the CTP synthase family. In terms of assembly, homotetramer.

It catalyses the reaction UTP + L-glutamine + ATP + H2O = CTP + L-glutamate + ADP + phosphate + 2 H(+). The enzyme catalyses L-glutamine + H2O = L-glutamate + NH4(+). The catalysed reaction is UTP + NH4(+) + ATP = CTP + ADP + phosphate + 2 H(+). It functions in the pathway pyrimidine metabolism; CTP biosynthesis via de novo pathway; CTP from UDP: step 2/2. Allosterically activated by GTP, when glutamine is the substrate; GTP has no effect on the reaction when ammonia is the substrate. The allosteric effector GTP functions by stabilizing the protein conformation that binds the tetrahedral intermediate(s) formed during glutamine hydrolysis. Inhibited by the product CTP, via allosteric rather than competitive inhibition. Catalyzes the ATP-dependent amination of UTP to CTP with either L-glutamine or ammonia as the source of nitrogen. Regulates intracellular CTP levels through interactions with the four ribonucleotide triphosphates. The protein is CTP synthase of Haemophilus influenzae (strain ATCC 51907 / DSM 11121 / KW20 / Rd).